Consider the following 88-residue polypeptide: Conotoxin Gm9.1 (88 aa).

Residues 1–27 (MHLSLARSAVLMLLLLFALGNFVVVQS) form the signal peptide. A propeptide spanning residues 28–58 (GLITRDVDNGQLTDNRRNLQTEWNPLSLFMS) is cleaved from the precursor. 3 disulfide bridges follow: Cys62/Cys76, Cys66/Cys78, and Cys72/Cys83. An Asparagine amide modification is found at Asn87.

This sequence belongs to the conotoxin P superfamily. Expressed by the venom duct.

It localises to the secreted. Neurotoxin. In vivo, elicits 'spasmodic' symptomatology. This chain is Conotoxin Gm9.1, found in Conus gloriamaris (Glory-of-the-Sea cone).